The chain runs to 394 residues: Elongation factor Tu (394 aa).

Residues 10–204 enclose the tr-type G domain; sequence KPHINIGTIG…AVDDNIPTPE (195 aa). The segment at 19 to 26 is G1; the sequence is GHVDHGKT. Residue 19–26 coordinates GTP; that stretch reads GHVDHGKT. Threonine 26 is a Mg(2+) binding site. The tract at residues 60 to 64 is G2; the sequence is GITIN. Positions 81–84 are G3; sequence DCPG. Residues 81–85 and 136–139 each bind GTP; these read DCPGH and NKID. Residues 136 to 139 form a G4 region; that stretch reads NKID. Positions 174–176 are G5; it reads SAL.

This sequence belongs to the TRAFAC class translation factor GTPase superfamily. Classic translation factor GTPase family. EF-Tu/EF-1A subfamily. In terms of assembly, monomer.

It is found in the cytoplasm. The catalysed reaction is GTP + H2O = GDP + phosphate + H(+). Functionally, GTP hydrolase that promotes the GTP-dependent binding of aminoacyl-tRNA to the A-site of ribosomes during protein biosynthesis. The protein is Elongation factor Tu of Chlamydia trachomatis serovar L2 (strain ATCC VR-902B / DSM 19102 / 434/Bu).